The chain runs to 215 residues: Adenylate kinase (215 aa).

An ATP-binding site is contributed by 10 to 15 (GAGKGT). An NMP region spans residues 30–59 (STGDMLRAAVKAGTELGLKAKSVMDAGGLV). AMP is bound by residues Thr31, Arg36, 57–59 (GLV), 85–88 (GFPR), and Gln92. An LID region spans residues 122 to 159 (GRRVHPASGRVYHTEYNPPKVAGKDDVSGEELVQREDD). Residues Arg123 and 132 to 133 (VY) each bind ATP. Positions 156 and 167 each coordinate AMP. Residue Gly201 participates in ATP binding.

This sequence belongs to the adenylate kinase family. In terms of assembly, monomer.

It is found in the cytoplasm. It catalyses the reaction AMP + ATP = 2 ADP. It functions in the pathway purine metabolism; AMP biosynthesis via salvage pathway; AMP from ADP: step 1/1. Catalyzes the reversible transfer of the terminal phosphate group between ATP and AMP. Plays an important role in cellular energy homeostasis and in adenine nucleotide metabolism. The protein is Adenylate kinase of Ectopseudomonas mendocina (strain ymp) (Pseudomonas mendocina).